A 274-amino-acid chain; its full sequence is 2,3,4,5-tetrahydropyridine-2,6-dicarboxylate N-succinyltransferase (274 aa).

The protein belongs to the transferase hexapeptide repeat family.

It is found in the cytoplasm. It catalyses the reaction (S)-2,3,4,5-tetrahydrodipicolinate + succinyl-CoA + H2O = (S)-2-succinylamino-6-oxoheptanedioate + CoA. Its pathway is amino-acid biosynthesis; L-lysine biosynthesis via DAP pathway; LL-2,6-diaminopimelate from (S)-tetrahydrodipicolinate (succinylase route): step 1/3. The protein is 2,3,4,5-tetrahydropyridine-2,6-dicarboxylate N-succinyltransferase of Alteromonas mediterranea (strain DSM 17117 / CIP 110805 / LMG 28347 / Deep ecotype).